The sequence spans 621 residues: UvrABC system protein C (621 aa).

The 79-residue stretch at 20-98 (MAPGVYCMYA…IKSLAPRYNV (79 aa)) folds into the GIY-YIG domain. The 36-residue stretch at 207–242 (DLLAEELIQAMQVASEHLEFEQAARLRDLLTSLRSM) folds into the UVR domain.

The protein belongs to the UvrC family. Interacts with UvrB in an incision complex.

The protein resides in the cytoplasm. The UvrABC repair system catalyzes the recognition and processing of DNA lesions. UvrC both incises the 5' and 3' sides of the lesion. The N-terminal half is responsible for the 3' incision and the C-terminal half is responsible for the 5' incision. The chain is UvrABC system protein C from Xylella fastidiosa (strain 9a5c).